Reading from the N-terminus, the 718-residue chain is Sec-independent protein translocase protein TatCt (718 aa).

The next 8 membrane-spanning stretches (helical) occupy residues Val-34–Trp-54, Ile-84–Ile-104, Leu-137–Leu-157, Phe-178–Gly-198, Trp-214–Pro-231, Phe-234–Ala-254, Leu-280–Val-300, and Leu-325–Val-345. The disordered stretch occupies residues Arg-421 to Thr-451. A compositionally biased stretch (acidic residues) spans Ala-425–Glu-434. Transmembrane regions (helical) follow at residues Ala-478 to Thr-498, Phe-539 to Ala-559, Thr-572 to Tyr-592, Phe-621 to Leu-641, Glu-661 to Met-681, and Phe-682 to Leu-702.

Belongs to the TatC family. Forms a complex with TatA.

It localises to the cell membrane. Part of the twin-arginine translocation (Tat) system that transports large folded proteins containing a characteristic twin-arginine motif in their signal peptide across membranes. This chain is Sec-independent protein translocase protein TatCt, found in Haloferax volcanii (strain ATCC 29605 / DSM 3757 / JCM 8879 / NBRC 14742 / NCIMB 2012 / VKM B-1768 / DS2) (Halobacterium volcanii).